The following is a 172-amino-acid chain: ATP synthase subunit b (172 aa).

The chain crosses the membrane as a helical span at residues 27–47 (LAIVIFGLYKFLPPFVGGILE).

It belongs to the ATPase B chain family. As to quaternary structure, F-type ATPases have 2 components, F(1) - the catalytic core - and F(0) - the membrane proton channel. F(1) has five subunits: alpha(3), beta(3), gamma(1), delta(1), epsilon(1). F(0) has four main subunits: a(1), b(1), b'(1) and c(10-14). The alpha and beta chains form an alternating ring which encloses part of the gamma chain. F(1) is attached to F(0) by a central stalk formed by the gamma and epsilon chains, while a peripheral stalk is formed by the delta, b and b' chains.

The protein resides in the cellular thylakoid membrane. Its function is as follows. F(1)F(0) ATP synthase produces ATP from ADP in the presence of a proton or sodium gradient. F-type ATPases consist of two structural domains, F(1) containing the extramembraneous catalytic core and F(0) containing the membrane proton channel, linked together by a central stalk and a peripheral stalk. During catalysis, ATP synthesis in the catalytic domain of F(1) is coupled via a rotary mechanism of the central stalk subunits to proton translocation. In terms of biological role, component of the F(0) channel, it forms part of the peripheral stalk, linking F(1) to F(0). In Prochlorococcus marinus (strain MIT 9303), this protein is ATP synthase subunit b.